Here is a 37-residue protein sequence, read N- to C-terminus: Large ribosomal subunit protein bL36B (37 aa).

Belongs to the bacterial ribosomal protein bL36 family.

The protein is Large ribosomal subunit protein bL36B of Paenarthrobacter aurescens (strain TC1).